The primary structure comprises 131 residues: Translation initiation factor 5A (131 aa).

A Hypusine modification is found at Lys-36.

This sequence belongs to the eIF-5A family.

It is found in the cytoplasm. Functionally, functions by promoting the formation of the first peptide bond. This chain is Translation initiation factor 5A, found in Saccharolobus solfataricus (strain ATCC 35092 / DSM 1617 / JCM 11322 / P2) (Sulfolobus solfataricus).